We begin with the raw amino-acid sequence, 283 residues long: Bifunctional protein FolD (283 aa).

NADP(+)-binding positions include 165–167 (GRS), Ser-190, and Ile-231.

The protein belongs to the tetrahydrofolate dehydrogenase/cyclohydrolase family. Homodimer.

It catalyses the reaction (6R)-5,10-methylene-5,6,7,8-tetrahydrofolate + NADP(+) = (6R)-5,10-methenyltetrahydrofolate + NADPH. It carries out the reaction (6R)-5,10-methenyltetrahydrofolate + H2O = (6R)-10-formyltetrahydrofolate + H(+). It functions in the pathway one-carbon metabolism; tetrahydrofolate interconversion. In terms of biological role, catalyzes the oxidation of 5,10-methylenetetrahydrofolate to 5,10-methenyltetrahydrofolate and then the hydrolysis of 5,10-methenyltetrahydrofolate to 10-formyltetrahydrofolate. This is Bifunctional protein FolD from Janthinobacterium sp. (strain Marseille) (Minibacterium massiliensis).